The following is a 316-amino-acid chain: Probable thioesterase lcsE (316 aa).

It belongs to the AMT4 thioesterase family.

The protein operates within secondary metabolite biosynthesis. Its function is as follows. Probable thioesterase; part of the gene cluster that mediates the biosynthesis of the lipopeptide antibiotics leucinostatins that show extensive biological activities, including antimalarial, antiviral, antibacterial, antifungal, and antitumor activities, as well as phytotoxic. Leucinostatin A contains nine amino acid residues, including the unusual amino acid 4-methyl-L-proline (MePro), 2-amino-6-hydroxy-4-methyl-8-oxodecanoic acid (AHyMeOA), 3-hydroxyleucine (HyLeu), alpha-aminoisobutyric acid (AIB), beta-Ala, a 4-methylhex-2-enoic acid at the N-terminus as well as a N1,N1-dimethylpropane-1,2-diamine (DPD) at the C-terminus. The biosynthesis of leucinostatins is probably initiated with the assembly of 4-methylhex-2-enoic acid by a reducing PKS. Two reducing polyketide synthases, lcsB and lcsC, have been identified in the cluster and it is not clear which is the one that assembles 4-methylhex-2-enoic acid since both contain KS, AT, DH, cMT, ER, KR and ACP domains. The polyketide residue might be transferred to the NRPS lcsA, mediated by two additional enzymes, the acyl-CoA ligase lcsD and the thioesterase lcsE. The linear polyketide carboxylic acid, which is released from PKS, is converted to a CoA thioester by lcsD, and then lcsE hydrolyzes the thiol bond and shuttles the polyketide intermediate to lcsA. The C domain of the first module catalyzed the condensation of 4-methylhex-2-enoic acid and MePro carried by domain A1, followed by successive condensations of nine amino acids to trigger the elongation of the linear peptide. A5 and A6 domains of lcsA are proposed to incorporate leucine, A2 AHyMeOA, and A3 incorporates HyLeu. A4, A7 and A8 incorporate AIB. The AHyMeOA in leucinostatin A activated by the A2 might be produced by the second PKS (lcsB or lcsC) present within the cluster. The MePro is probably produced via leucine cyclization and may originate from a separate pathway, independent of the cluster. Another nonproteinogenic amino acid, beta-Ala, could be produced by an aspartic acid decarboxylase also localized outside of the cluster. Two candidates are VFPBJ_01400 and VFPBJ_10476. The final peptide scaffold may be released by the NAD(P)H-dependent thioester reductase (TE) at the C-terminal region of lcsA. Transamination of the lcsA product by the transaminase lcsP may produce DPD at the C-terminus. Further hydroxylation steps performed alternatively by the cytochrome P450 monooxygenases lcsI, lcsK and lcsN then yield the non-methylated leucinostatins precursor. It is also possible that leucines can be hydroxylated prior to their incorporation into the peptide. Varying extents of methylation then lead to the formation of leucinostatins A and B. The protein is Probable thioesterase lcsE of Purpureocillium lilacinum (Paecilomyces lilacinus).